The primary structure comprises 209 residues: uncharacterized protein (209 aa).

This is an uncharacterized protein from Caldicellulosiruptor saccharolyticus (Caldocellum saccharolyticum).